Here is a 399-residue protein sequence, read N- to C-terminus: MSFYSNLPSAGQSSRGSSTSGRNGVGLEPLYPTIFEIMSSQEIDSLLPASIRYLLANHLVANFPNRYTLRLNKYFFEWFQAIKGFVEWYHLKTYNSTFIDRFYGLQLFSSRDRNLALTQCLNPKGQSEWPQGLQLNQQQKSVIFLEKIILPYITAKLDEILEKISMNNIFSSDETENKWPKRAFLRIYPFIKKLLALSNLLVKLLFLTKRTGSVSLLQYLFKIEYTTVRPLSSELSGLKETKGMDNRLRKTNISSIFALMQGQLSIIPRFLTFMGSQFFPTFIFVLRVYQWWTTQDMTTKLQKRVNDLDEDIPRPPFSSHSDKTEDKEGVSEACPVCEKTVQNPCVLETGYVACYPCAISYLVNNEGHCPVTNKKLLGCTYNKHTNKWEVVTGIRKLLI.

The interval 1–24 (MSFYSNLPSAGQSSRGSSTSGRNG) is disordered. Residues 1 to 33 (MSFYSNLPSAGQSSRGSSTSGRNGVGLEPLYPT) lie on the Peroxisomal matrix side of the membrane. Residues 9 to 24 (SAGQSSRGSSTSGRNG) show a composition bias toward low complexity. A helical transmembrane segment spans residues 34–62 (IFEIMSSQEIDSLLPASIRYLLANHLVAN). Residues 63-67 (FPNRY) lie on the Cytoplasmic side of the membrane. The chain crosses the membrane as a helical span at residues 68–92 (TLRLNKYFFEWFQAIKGFVEWYHLK). Residues 93-136 (TYNSTFIDRFYGLQLFSSRDRNLALTQCLNPKGQSEWPQGLQLN) are Peroxisomal matrix-facing. A helical transmembrane segment spans residues 137–168 (QQQKSVIFLEKIILPYITAKLDEILEKISMNN). The Cytoplasmic portion of the chain corresponds to 169–171 (IFS). The chain crosses the membrane as a helical span at residues 172-208 (SDETENKWPKRAFLRIYPFIKKLLALSNLLVKLLFLT). Topologically, residues 209 to 277 (KRTGSVSLLQ…PRFLTFMGSQ (69 aa)) are peroxisomal matrix. Residues 278–305 (FFPTFIFVLRVYQWWTTQDMTTKLQKRV) form a helical membrane-spanning segment. Over 306–399 (NDLDEDIPRP…VVTGIRKLLI (94 aa)) the chain is Cytoplasmic. Zn(2+)-binding residues include cysteine 334, cysteine 337, cysteine 354, and cysteine 357. The RING-type; degenerate zinc finger occupies 334–373 (CPVCEKTVQNPCVLETGYVACYPCAISYLVNNEGHCPVTN).

This sequence belongs to the pex2/pex10/pex12 family. As to quaternary structure, component of the PEX2-PEX10-PEX12 retrotranslocation channel, composed of PEX2, PEX10 and PEX12.

It localises to the peroxisome membrane. It participates in protein modification; protein ubiquitination. In terms of biological role, component of a retrotranslocation channel required for peroxisome organization by mediating export of the PEX5 receptor from peroxisomes to the cytosol, thereby promoting PEX5 recycling. The retrotranslocation channel is composed of PEX2, PEX10 and PEX12; each subunit contributing transmembrane segments that coassemble into an open channel that specifically allows the passage of PEX5 through the peroxisomal membrane. PEX12 also regulates PEX5 recycling by activating the E3 ubiquitin-protein ligase activity of PEX10. When PEX5 recycling is compromised, PEX12 stimulates PEX10-mediated polyubiquitination of PEX5, leading to its subsequent degradation. The protein is Peroxisome assembly protein 12 of Saccharomyces cerevisiae (strain ATCC 204508 / S288c) (Baker's yeast).